The following is a 290-amino-acid chain: ADP-dependent (S)-NAD(P)H-hydrate dehydratase (290 aa).

One can recognise a YjeF C-terminal domain in the interval 5–278 (NQTLLEKVII…RYLPKIMKII (274 aa)). Ala-40, Gly-103, and His-152 together coordinate (6S)-NADPHX. Gly-218 contacts AMP. Residue Asp-219 participates in (6S)-NADPHX binding.

It belongs to the NnrD/CARKD family. Homotetramer. Mg(2+) is required as a cofactor.

It catalyses the reaction (6S)-NADHX + ADP = AMP + phosphate + NADH + H(+). The enzyme catalyses (6S)-NADPHX + ADP = AMP + phosphate + NADPH + H(+). Catalyzes the dehydration of the S-form of NAD(P)HX at the expense of ADP, which is converted to AMP. Together with NAD(P)HX epimerase, which catalyzes the epimerization of the S- and R-forms, the enzyme allows the repair of both epimers of NAD(P)HX, a damaged form of NAD(P)H that is a result of enzymatic or heat-dependent hydration. The chain is ADP-dependent (S)-NAD(P)H-hydrate dehydratase from Streptococcus pneumoniae (strain ATCC BAA-255 / R6).